The primary structure comprises 461 residues: Tip elongation protein 1 (461 aa).

One can recognise a CAP-Gly domain in the interval 22 to 69 (GEVENRKGVYVGLELLPEFAEFGKNRGVVDGREYFKTKNNEKTGIFVP). Ser-82, Ser-84, Ser-289, Ser-294, and Ser-305 each carry phosphoserine. Residues 134-418 (TEKILQKRIE…RMSPAEFELE (285 aa)) adopt a coiled-coil conformation. A compositionally biased stretch (polar residues) spans 278–303 (KANSSTANEKLSHMESSSPTLTNASF). The tract at residues 278–323 (KANSSTANEKLSHMESSSPTLTNASFESPKRGKGSNDLPENHPQRR) is disordered. Phosphothreonine is present on Thr-367. Residues 417 to 437 (LETTQEVEENDSDSHDDEETW) form a disordered region.

As to quaternary structure, monomer. Interacts with tea1 and tea2. Interacts with tea4 in the presence of tea1.

The protein localises to the cytoplasm. It localises to the cytoskeleton. In terms of biological role, has a role in stabilizing and targeting the growing tips of the microtubules along the long axis of the cell, directing them to the ends of the cell. Acts as a cargo for tea2. The chain is Tip elongation protein 1 (tip1) from Schizosaccharomyces pombe (strain 972 / ATCC 24843) (Fission yeast).